We begin with the raw amino-acid sequence, 1040 residues long: Tudor domain-containing protein 5 (1040 aa).

HTH OST-type domains lie at 7–80, 122–197, and 291–365; these read IQDC…KAIP, VPPI…LKKS, and VDPE…FDAD. The region spanning 533–592 is the Tudor domain; the sequence is FIQPGHLCCVKISEDKWWYRVIIHRILGKKEVEVFYPDFGNIGTVQKSSLRFLKCCYTKL. Serine 809 is modified (phosphoserine). 2 disordered regions span residues 857-891 and 912-975; these read DVKG…YPLD and AERS…AKDK. 2 stretches are compositionally biased toward polar residues: residues 872–891 and 912–924; these read EKNT…YPLD and AERS…SIQT. Residue serine 943 is modified to Phosphoserine. Positions 946–956 are enriched in polar residues; that stretch reads NHSGSVESSPG. A compositionally biased stretch (basic and acidic residues) spans 958–975; sequence LKKEDVSNSRAEATAKDK.

It belongs to the TDRD5 family. As to expression, gonad-specific. Mainly expressed in testis. Present at low level in ovary (at protein level).

The protein localises to the cytoplasm. Functionally, required during spermiogenesis to participate in the repression transposable elements and prevent their mobilization, which is essential for the germline integrity. Probably acts via the piRNA metabolic process, which mediates the repression of transposable elements during meiosis by forming complexes composed of piRNAs and Piwi proteins and govern the methylation and subsequent repression of transposons. Required for chromatoid body (CB) assembly. This Mus musculus (Mouse) protein is Tudor domain-containing protein 5 (Tdrd5).